The chain runs to 375 residues: Probable aminomethyltransferase (375 aa).

This sequence belongs to the GcvT family. In terms of assembly, the glycine cleavage system is composed of four proteins: P, T, L and H.

The enzyme catalyses N(6)-[(R)-S(8)-aminomethyldihydrolipoyl]-L-lysyl-[protein] + (6S)-5,6,7,8-tetrahydrofolate = N(6)-[(R)-dihydrolipoyl]-L-lysyl-[protein] + (6R)-5,10-methylene-5,6,7,8-tetrahydrofolate + NH4(+). Functionally, the glycine cleavage system catalyzes the degradation of glycine. In Aeropyrum pernix (strain ATCC 700893 / DSM 11879 / JCM 9820 / NBRC 100138 / K1), this protein is Probable aminomethyltransferase.